We begin with the raw amino-acid sequence, 3678 residues long: Dystrophin (3678 aa).

Residues 1 to 240 form an actin-binding region; that stretch reads MLWWEEVEDC…YITSLFQVLP (240 aa). Calponin-homology (CH) domains lie at 15–119 and 134–240; these read DVQK…LHWQ and TNSE…QVLP. Positions 63 to 72 are ANK2- and ANK-3 binding; that stretch reads PKEKGSTRVH. The disordered stretch occupies residues 313–333; the sequence is DSTQSPYPSQHLEAPRDKSLD. Spectrin repeat units follow at residues 341-449, 450-558, 561-669, 721-830, 832-936, 945-1047, 1050-1156, 1159-1265, 1268-1369, 1370-1465, 1470-1570, 1573-1678, 1681-1780, 1781-1876, 1879-1981, 1994-2103, 2106-2210, 2213-2318, 2319-2416, 2468-2570, 2573-2679, 2682-2795, 2801-2923, and 2928-3033; these read VNLD…KLHK, VLMD…VLQD, LKWQ…QISQ, ELRK…WLEY, TNII…ELQT, RYQE…KLEE, NKLR…ALKA, DKTV…TLEE, ACWH…LLEQ, SIQS…LFQK, EQRL…QLEK, KLSR…LLLE, KHME…KASI, PLKE…KALE, HQWY…TLHE, DVSY…RFDR, EKWR…RIEE, NVLS…ELEV, HLKD…LRTK, FNRA…QLNE, KDST…ALEE, RLLQ…HLEA, KRLH…RKID, and RLQE…QLHE. An interaction with SYNM region spans residues 1417 to 1915; the sequence is SDLTSHEISL…PEPRDERKLK (499 aa). Positions 3048–3081 constitute a WW domain; the sequence is TSVQGPWERAISPNKVPYYINHETQTTCWDHPKM. Positions 3051–3401 are interaction with SYNM; the sequence is QGPWERAISP…TVLEGDNMET (351 aa). The segment at 3301 to 3357 adopts a ZZ-type; degenerate zinc-finger fold; that stretch reads KHQAKCNICKECPIIGFRYRSLKHFNYDICQSCFFSGRVAKGHKMHYPMVEYCTPTT. 4 residues coordinate Zn(2+): C3306, C3309, C3330, and C3333. Residues 3459–3511 form a binds to SNTB1 region; the sequence is DDEHLLIQHYCQSLNQDSPLSQPRSPAQILISLESEERGELERILADLEEENR. A phosphoserine mark is found at S3476, S3483, and S3493. 2 disordered regions span residues 3521–3547 and 3596–3678; these read KQQH…QSPR and EAKV…EDTM. 2 stretches are compositionally biased toward polar residues: residues 3600 to 3619 and 3655 to 3665; these read NGTT…SSQP and QLNNSFPSSRG. 6 positions are modified to phosphoserine: S3605, S3606, S3610, S3616, S3617, and S3659.

Interacts with SYNM. Interacts with the syntrophins SNTG1 and SNTG2. Interacts with KRT19. Component of the dystrophin-associated glycoprotein complex which is composed of three subcomplexes: a cytoplasmic complex comprised of DMD (or UTRN), DTNA and a number of syntrophins, such as SNTB1, SNTB2, SNTG1 and SNTG2, the transmembrane dystroglycan complex, and the sarcoglycan-sarcospan complex. Interacts with DAG1 (betaDAG1) with DMD; the interaction is inhibited by phosphorylation on the PPXY motif of DAG1. Interacts with SYNM; SNTA1 and SNTB1. Interacts with CMYA5. Directly interacts with ANK2 and ANK3; these interactions do not interfere with betaDAG1-binding and are necessary for proper localization in muscle cells. Identified in a dystroglycan complex that contains at least PRX, DRP2, UTRN, DMD and DAG1. Interacts with DTNB. Interacts with PGM5; the interaction is direct. Interacts with NOS1; localizes NOS1 to sarcolemma in muscle cells. Detected in quadriceps muscle and in sciatic nerve (at protein level). Expressed in the sarcolemma of the soleus muscle (at protein level). Differentially expressed during skeletal muscle, heart, and brain development. Also expressed in retina.

The protein resides in the cell membrane. The protein localises to the sarcolemma. It is found in the cytoplasm. Its subcellular location is the cytoskeleton. It localises to the postsynaptic cell membrane. Functionally, anchors the extracellular matrix to the cytoskeleton via F-actin. Ligand for dystroglycan. Component of the dystrophin-associated glycoprotein complex which accumulates at the neuromuscular junction (NMJ) and at a variety of synapses in the peripheral and central nervous systems and has a structural function in stabilizing the sarcolemma. Also implicated in signaling events and synaptic transmission. The sequence is that of Dystrophin (Dmd) from Mus musculus (Mouse).